We begin with the raw amino-acid sequence, 490 residues long: MSIAICGGGIAGLSTAFYLARLIPKCTIDLYEKGPRLGGWLQSVKIPCADSPTGTVLFEQGPRTLRPAGVAGLANLDLISKLGIEDKLLRISSNSPSAKNRYIYYPDRLNEIPSSILGSIKSIMQPALRPMPLAMMLEPFRKSKRDSTDESVGSFMRRRFGKNVTDRVMSAMINGIYAGDLNDLSMHSSMFGFLAKIEKKYGNITLGLIRALLAREILSPAEKALKAALLAEPKTAELSNSMKSTSMFAFKEGIETITLSIADELKKMPNVKIHLNKPAKTLVPHKTQSLVDVNGQAYEYVVFANSSRNLENLISCPKMETPTSSVYVVNVYYKDPNVLPIRGFGLLIPSCTPNNPNHVLGIVFDSEQNNPENGSKVTVMMGGSAYTKNTSLIPTNPEEAVNNALKALQHTLKISSKPTLTNATLQQNCIPQYRVGHQDNLNSLKSWIEKNMGGRILLTGSWYNGVSIGDCIMNGHSTARKLASLMNSSS.

Residues 7-12, 32-33, tryptophan 40, 61-64, and 466-468 each bind FAD; these read GGGIAG, EK, GPRT, and VSI.

It belongs to the protoporphyrinogen/coproporphyrinogen oxidase family. Protoporphyrinogen oxidase subfamily. FAD is required as a cofactor.

The protein localises to the mitochondrion. The enzyme catalyses protoporphyrinogen IX + 3 O2 = protoporphyrin IX + 3 H2O2. It functions in the pathway porphyrin-containing compound metabolism; protoporphyrin-IX biosynthesis; protoporphyrin-IX from protoporphyrinogen-IX: step 1/1. In terms of biological role, catalyzes the 6-electron oxidation of protoporphyrinogen-IX to form protoporphyrin-IX. The chain is Protoporphyrinogen oxidase (hem14) from Schizosaccharomyces pombe (strain 972 / ATCC 24843) (Fission yeast).